Consider the following 332-residue polypeptide: Glycerol-3-phosphate dehydrogenase [NAD(P)+] (332 aa).

The NADPH site is built by tryptophan 13, lysine 34, and lysine 108. Lysine 108, glycine 136, and serine 138 together coordinate sn-glycerol 3-phosphate. NADPH is bound at residue alanine 140. Residues lysine 191, aspartate 244, serine 254, arginine 255, and asparagine 256 each contribute to the sn-glycerol 3-phosphate site. Catalysis depends on lysine 191, which acts as the Proton acceptor. Arginine 255 is an NADPH binding site. NADPH-binding residues include valine 279 and glutamate 281.

The protein belongs to the NAD-dependent glycerol-3-phosphate dehydrogenase family.

The protein localises to the cytoplasm. It carries out the reaction sn-glycerol 3-phosphate + NAD(+) = dihydroxyacetone phosphate + NADH + H(+). The enzyme catalyses sn-glycerol 3-phosphate + NADP(+) = dihydroxyacetone phosphate + NADPH + H(+). It participates in membrane lipid metabolism; glycerophospholipid metabolism. Catalyzes the reduction of the glycolytic intermediate dihydroxyacetone phosphate (DHAP) to sn-glycerol 3-phosphate (G3P), the key precursor for phospholipid synthesis. The chain is Glycerol-3-phosphate dehydrogenase [NAD(P)+] from Francisella tularensis subsp. tularensis (strain FSC 198).